We begin with the raw amino-acid sequence, 222 residues long: Endonuclease V (222 aa).

Residues Asp34 and Asp102 each coordinate Mg(2+).

The protein belongs to the endonuclease V family. It depends on Mg(2+) as a cofactor.

The protein resides in the cytoplasm. The catalysed reaction is Endonucleolytic cleavage at apurinic or apyrimidinic sites to products with a 5'-phosphate.. Functionally, DNA repair enzyme involved in the repair of deaminated bases. Selectively cleaves double-stranded DNA at the second phosphodiester bond 3' to a deoxyinosine leaving behind the intact lesion on the nicked DNA. This Proteus mirabilis (strain HI4320) protein is Endonuclease V.